The chain runs to 77 residues: Acyl carrier protein (77 aa).

Residues 1–76 (MSIEERVKKI…SAIDYVTKAN (76 aa)) form the Carrier domain. O-(pantetheine 4'-phosphoryl)serine is present on Ser36.

The protein belongs to the acyl carrier protein (ACP) family. Post-translationally, 4'-phosphopantetheine is transferred from CoA to a specific serine of apo-ACP by AcpS. This modification is essential for activity because fatty acids are bound in thioester linkage to the sulfhydryl of the prosthetic group.

Its subcellular location is the cytoplasm. The protein operates within lipid metabolism; fatty acid biosynthesis. Functionally, carrier of the growing fatty acid chain in fatty acid biosynthesis. The polypeptide is Acyl carrier protein (Actinobacillus pleuropneumoniae serotype 5b (strain L20)).